A 258-amino-acid polypeptide reads, in one-letter code: F-box/SPRY domain-containing protein 1 (258 aa).

One can recognise an F-box domain in the interval 6–54 (TEYAPDIPDNVLELIFSYLKLQDLRNCSLVCKSWNRFLNDENNEVWRAQ). The region spanning 64-256 (FKTDLLSVVP…ISMVYLGPPL (193 aa)) is the B30.2/SPRY domain.

This sequence belongs to the FBXO45/Fsn family. Component of an E3 ubiquitin ligase complex composed of hiw and Fsn.

The protein resides in the synapse. Its pathway is protein modification; protein ubiquitination. Required in the presynaptic motoneuron to down-regulate the levels of wnd and restrain synaptic terminal growth at the neuromuscular junction (NMJ). The chain is F-box/SPRY domain-containing protein 1 from Aedes aegypti (Yellowfever mosquito).